A 318-amino-acid polypeptide reads, in one-letter code: Sensor histidine kinase NatK (318 aa).

Transmembrane regions (helical) follow at residues 4-24 (LFQCLYLILFSFICYQGAAAF), 27-47 (STAASWLAAALGAAAAGLYIW), and 72-82 (VGVVLIGTDIM). The Histidine kinase domain maps to 132–318 (RNHDTMKHIT…RLEIKIPFQK (187 aa)). A Phosphohistidine; by autocatalysis modification is found at His134.

The protein localises to the cell membrane. It carries out the reaction ATP + protein L-histidine = ADP + protein N-phospho-L-histidine.. Functionally, member of the two-component regulatory system NatK/NatR that positively regulates the expression of the natAB operon. Potentially phosphorylates NatR. This is Sensor histidine kinase NatK from Bacillus subtilis (strain 168).